The following is a 475-amino-acid chain: SAM50-like protein SPAC17C9.06 (475 aa).

One can recognise a POTRA domain in the interval 44 to 130 (VGISSIRVTG…LDVTIQVKEK (87 aa)).

Belongs to the SAM50/omp85 family. In terms of assembly, associates with the mitochondrial contact site and cristae organizing system (MICOS) complex (also known as MINOS or MitOS complex).

It is found in the mitochondrion outer membrane. Its function is as follows. May be required for the assembly pathway of mitochondrial outer membrane proteins. This Schizosaccharomyces pombe (strain 972 / ATCC 24843) (Fission yeast) protein is SAM50-like protein SPAC17C9.06.